The sequence spans 419 residues: Transcription termination factor Rho (419 aa).

Positions 48 to 123 (EISGDGVLEI…LKVDSINFDR (76 aa)) constitute a Rho RNA-BD domain. RNA-binding regions lie at residues 61–66 (GFGFLR), 78–80 (DIY), and 108–110 (ERY). ATP contacts are provided by residues 169–174 (GKGQRG), 181–186 (KAGKTI), and R212. The segment at 284–288 (VLTGG) is RNA-binding 2.

It belongs to the Rho family. In terms of assembly, homohexamer. The homohexamer assembles into an open ring structure.

Facilitates transcription termination by a mechanism that involves Rho binding to the nascent RNA, activation of Rho's RNA-dependent ATPase activity, and release of the mRNA from the DNA template. This chain is Transcription termination factor Rho, found in Pseudomonas aeruginosa (strain ATCC 15692 / DSM 22644 / CIP 104116 / JCM 14847 / LMG 12228 / 1C / PRS 101 / PAO1).